We begin with the raw amino-acid sequence, 433 residues long: MSKIVKVLGREIIDSRGNPTVEAEVHLEGGFVGMAAAPSGASTGSREALELRDGDKSRFLGKGVLKALEAVNGPIAEALLGKDATDQAAIDQVMIDLDGTENKSKFGANAILAVSLANAKAGAAAKGMPLYEHIAELNGTAGQFSMPLPMMNIINGGEHADNNVDIQEFMIQPVGAKTFREAVRIGAEVFHNLAKVLKAKGLSTAVGDEGGFAPNLESNAAALAAIKEAVEAAGYELGKDVTLAMDCAASEFYDKEAGNYNMKGEGKIFTSEEFNFYLQDLANQYPIVSIEDGLDESDWAGFKHQTELLGDKLQIVGDDLFVTNTKILAEGIEKGVANSILIKFNQIGSLTETLAAIKMAKDAGYTAVISHRSGETEDATIADLAVGTAAGQIKTGSMSRSDRVAKYNQLLRIEEALGAKAPFNGLKEVKGQA.

Position 167 (Gln-167) interacts with (2R)-2-phosphoglycerate. Residue Glu-209 is the Proton donor of the active site. Asp-246, Glu-291, and Asp-318 together coordinate Mg(2+). Positions 343, 372, 373, and 394 each coordinate (2R)-2-phosphoglycerate. The Proton acceptor role is filled by Lys-343.

This sequence belongs to the enolase family. In terms of assembly, component of the RNA degradosome, a multiprotein complex involved in RNA processing and mRNA degradation. The cofactor is Mg(2+).

The protein resides in the cytoplasm. The protein localises to the secreted. It localises to the cell surface. It catalyses the reaction (2R)-2-phosphoglycerate = phosphoenolpyruvate + H2O. It functions in the pathway carbohydrate degradation; glycolysis; pyruvate from D-glyceraldehyde 3-phosphate: step 4/5. Functionally, catalyzes the reversible conversion of 2-phosphoglycerate (2-PG) into phosphoenolpyruvate (PEP). It is essential for the degradation of carbohydrates via glycolysis. This is Enolase from Photobacterium profundum (strain SS9).